The sequence spans 194 residues: RNA polymerase II subunit A C-terminal domain phosphatase SSU72 like protein 2 (194 aa).

It belongs to the SSU72 phosphatase family.

The protein localises to the nucleus. It catalyses the reaction O-phospho-L-seryl-[protein] + H2O = L-seryl-[protein] + phosphate. The enzyme catalyses O-phospho-L-threonyl-[protein] + H2O = L-threonyl-[protein] + phosphate. Its function is as follows. Protein phosphatase that catalyzes the dephosphorylation of the C-terminal domain of RNA polymerase II. Plays a role in RNA processing and termination. The polypeptide is RNA polymerase II subunit A C-terminal domain phosphatase SSU72 like protein 2 (Homo sapiens (Human)).